The sequence spans 200 residues: MKVGVIAYQGSFEEHAIQLKRAMSKLNLTGEVIAVKKPKDVDLIDGVVIPGGESTTIGIIAEKLGVLDEIKAKINAGLPVLGTCAGAIMLAKDVSDAKVGKKSQPLIGTMDIQVVRNYYGRQRESFETDLDFRVIGGGKARVVFIRAPIIKRTWNDATALISFENGIVMAEQKNMLATTFHPELSESTIVHEYFLSKIKK.

Position 52 to 54 (52 to 54) interacts with L-glutamine; it reads GES. The active-site Nucleophile is Cys84. L-glutamine contacts are provided by residues Arg116 and 145–146; that span reads IR. Catalysis depends on charge relay system residues His181 and Glu183.

It belongs to the glutaminase PdxT/SNO family. In terms of assembly, in the presence of PdxS, forms a dodecamer of heterodimers. Only shows activity in the heterodimer.

It catalyses the reaction aldehydo-D-ribose 5-phosphate + D-glyceraldehyde 3-phosphate + L-glutamine = pyridoxal 5'-phosphate + L-glutamate + phosphate + 3 H2O + H(+). The catalysed reaction is L-glutamine + H2O = L-glutamate + NH4(+). It functions in the pathway cofactor biosynthesis; pyridoxal 5'-phosphate biosynthesis. Its function is as follows. Catalyzes the hydrolysis of glutamine to glutamate and ammonia as part of the biosynthesis of pyridoxal 5'-phosphate. The resulting ammonia molecule is channeled to the active site of PdxS. This chain is Pyridoxal 5'-phosphate synthase subunit PdxT, found in Sulfolobus acidocaldarius (strain ATCC 33909 / DSM 639 / JCM 8929 / NBRC 15157 / NCIMB 11770).